Here is a 233-residue protein sequence, read N- to C-terminus: Glucosamine-6-phosphate deaminase (233 aa).

The Proton acceptor; for enolization step role is filled by D62. The For ring-opening step role is filled by N128. H130 (proton acceptor; for ring-opening step) is an active-site residue. Residue E135 is the For ring-opening step of the active site.

Belongs to the glucosamine/galactosamine-6-phosphate isomerase family. NagB subfamily.

It catalyses the reaction alpha-D-glucosamine 6-phosphate + H2O = beta-D-fructose 6-phosphate + NH4(+). It participates in amino-sugar metabolism; N-acetylneuraminate degradation; D-fructose 6-phosphate from N-acetylneuraminate: step 5/5. Functionally, catalyzes the reversible isomerization-deamination of glucosamine 6-phosphate (GlcN6P) to form fructose 6-phosphate (Fru6P) and ammonium ion. This is Glucosamine-6-phosphate deaminase from Streptococcus pneumoniae serotype 4 (strain ATCC BAA-334 / TIGR4).